Reading from the N-terminus, the 149-residue chain is Inner membrane protein YidI (149 aa).

Residues 1–8 (MGIIAQNK) are Cytoplasmic-facing. Residues 9–31 (ISSLGMLFGAIALMMGIIHFSFG) form a helical membrane-spanning segment. The Periplasmic portion of the chain corresponds to 32–77 (PFSAPPPTFESIVADKTAEIKRGLLAGIKGEKITTVEKKEDVDVDK). A helical membrane pass occupies residues 78–97 (ILNQSGIALAIAALLCAFIG). At 98-117 (GMRKENRWGIRGALVFGGGT) the chain is on the cytoplasmic side. A helical membrane pass occupies residues 118–140 (LAFHTLLFGIGIVCSILLIFLIF). The Periplasmic portion of the chain corresponds to 141–149 (SFLTGGSLV).

Its subcellular location is the cell inner membrane. The sequence is that of Inner membrane protein YidI (yidI) from Escherichia coli (strain K12).